The primary structure comprises 176 residues: Putative REP-associated tyrosine transposase (176 aa).

Mg(2+) contacts are provided by His59 and His61. Tyr148 functions as the Nucleophile in the catalytic mechanism.

It belongs to the transposase 17 family. RAYT subfamily. As to quaternary structure, homodimer. It depends on Mg(2+) as a cofactor.

Transposase responsible for transposition an insertion sequence (IS) element. Transposition occurs in 2 main steps, excision from the donor DNA 'top strand' into a single strand circle and its subsequent reinsertion into the DNA target. This increases the copy number of the IS. In Haemophilus influenzae (strain ATCC 51907 / DSM 11121 / KW20 / Rd), this protein is Putative REP-associated tyrosine transposase.